The sequence spans 244 residues: Phosphonates import ATP-binding protein PhnC (244 aa).

One can recognise an ABC transporter domain in the interval 6–244 (IECHNLETAY…LQAQFVVNSQ (239 aa)). Position 41 to 48 (41 to 48 (GLNGAGKS)) interacts with ATP.

The protein belongs to the ABC transporter superfamily. Phosphonates importer (TC 3.A.1.9.1) family. The complex is composed of two ATP-binding proteins (PhnC), two transmembrane proteins (PhnE) and a solute-binding protein (PhnD).

The protein resides in the cell inner membrane. The catalysed reaction is phosphonate(out) + ATP + H2O = phosphonate(in) + ADP + phosphate + H(+). In terms of biological role, part of the ABC transporter complex PhnCDE involved in phosphonates import. Responsible for energy coupling to the transport system. The protein is Phosphonates import ATP-binding protein PhnC of Trichormus variabilis (strain ATCC 29413 / PCC 7937) (Anabaena variabilis).